Reading from the N-terminus, the 433-residue chain is MAEQVFQNFETLQLHAGYTPDPHTRSTAVPIYATSSYTFNDSAHGARLFGLKELGNIYSRLMNPTVDVFEKRIAALEGGIAAAATSSGQAAQFLTIATLAKAGDNIVASSHLYGGTYNQLNVLLPRFGIKTKFVRSGKLEDYAAAIDDQTRAIYVESMSNPDYVVPDFEGIAKIAHEHGIPLVVDNTLGAGGYYIRPIEHGADIVVHSATKWIGGHGTTIGGVIVDSGRFNWNKHSERFPEMVEPSPSYHGLKYWEAFGPATFITRIRVEMLRDIGACLSPFSAQQLLLGIETLGLRAERHAQNTEKLAKYFESSPNVSWVLWPGSESHPTYAQAKKYLTRGFGAMLSIGVKGDASAGSKVVDGLKLVSNLANVGDAKSLAIHPWSTTHEQLSEDERLASGVTEDMIRISVGIEHVDDIIADFEQSFQKAYGS.

Position 211 is an N6-(pyridoxal phosphate)lysine (lysine 211).

This sequence belongs to the trans-sulfuration enzymes family. It depends on pyridoxal 5'-phosphate as a cofactor.

It functions in the pathway mycotoxin biosynthesis. Sulfhydrylase; part of the gene cluster that mediates the biosynthesis of fusaric acid, a mycotoxin with low to moderate toxicity to animals and humans, but with high phytotoxic properties. L-aspartate is suggested as fusaric acid amino acid precursor that is activated and further processed to O-acetyl-L-homoserine by cluster enzymes aspartate kinase FUB3 and homoserine O-acetyltransferase FUB5, as well as enzymes of the primary metabolism. The polyketide synthase (PKS) FUB1 generates the triketide trans-2-hexenal which is presumptively released by the hydrolase FUB4 and linked to the NRPS-bound amino acid precursor by NAD(P)-dependent dehydrogenase FUB6. FUB1, FUB4, and the non-canonical NRPS Fub8 may form an enzyme complex. Further processing of the NRPS-bound intermediate might be carried out by FUB6 and the sulfhydrylase FUB7, enabling a spontaneous electrocyclization to close the carbon backbone of fusaric acid. Dihydrofusaric acid is likely to be released via reduction by the thioester reductase (TR) domain of FUB8 whereupon the final oxidation to fusaric acid may (also) be performed by the FMN-dependent dehydrogenase FUB9. The polypeptide is Sulfhydrylase FUB7 (Fusarium oxysporum f. sp. lycopersici (strain 4287 / CBS 123668 / FGSC 9935 / NRRL 34936) (Fusarium vascular wilt of tomato)).